We begin with the raw amino-acid sequence, 789 residues long: Ribosomal protein S6 kinase alpha-5 (789 aa).

Positions 39–308 (FELLKVLGTG…ADEIKQHPFF (270 aa)) constitute a Protein kinase 1 domain. ATP-binding positions include 45-53 (LGTGAYGKV) and lysine 71. The active-site Proton acceptor is aspartate 167. Serine 202 carries the phosphoserine; by autocatalysis modification. One can recognise an AGC-kinase C-terminal domain in the interval 309 to 377 (QNINWDDLAA…VAPSILFKRN (69 aa)). A Phosphoserine modification is found at serine 350. A phosphoserine; by autocatalysis mark is found at serine 366 and serine 371. In terms of domain architecture, Protein kinase 2 spans 416–677 (DLKEKPLGEG…MSSLRYNEWL (262 aa)). ATP contacts are provided by residues 422-430 (LGEGSFSIC) and lysine 445. The active-site Proton acceptor is aspartate 534. Threonine 571 and threonine 690 each carry phosphothreonine. The interval 731–789 (AKRRKMKKTSTSTETRSSSSESSHSSSSHSHGKTTPTKTLQPTNPTDSNNPETIFQFSD) is disordered. Positions 739 to 769 (TSTSTETRSSSSESSHSSSSHSHGKTTPTKT) are enriched in low complexity. Serine 740, serine 742, and serine 748 each carry phosphoserine; by autocatalysis. Polar residues predominate over residues 770–789 (LQPTNPTDSNNPETIFQFSD).

The protein belongs to the protein kinase superfamily. AGC Ser/Thr protein kinase family. S6 kinase subfamily. Requires Mg(2+) as cofactor. Ser-366 and Thr-571 phosphorylation is required for kinase activity. Ser-366 and Ser-202 are autophosphorylated by the C-terminal kinase domain, and their phosphorylation is essential for the catalytic activity of the N-terminal kinase domain. Phosphorylated at Ser-350, Thr-571 and Thr-690 by MAP kinases. Autophosphorylated at Ser-740, Ser-742 and Ser-748 by the N-terminal kinase domain. As to expression, widely expressed with high levels in heart, brain and placenta. Less abundant in lung, kidney and liver.

It localises to the nucleus. The catalysed reaction is L-seryl-[protein] + ATP = O-phospho-L-seryl-[protein] + ADP + H(+). It catalyses the reaction L-threonyl-[protein] + ATP = O-phospho-L-threonyl-[protein] + ADP + H(+). With respect to regulation, activated by phosphorylation at Ser-350, Thr-571 and Thr-690 by MAP kinases, and by further autophosphorylation of Ser-202, Ser-366 and Ser-371 by the activated C-terminal kinase domain. The active N-terminal kinase domain finally phosphorylates downstream substrates, as well as Ser-740, Ser-742 and Ser-748 in its own C-terminal region. Its function is as follows. Serine/threonine-protein kinase that is required for the mitogen or stress-induced phosphorylation of the transcription factors CREB1 and ATF1 and that contributes to gene activation by histone phosphorylation. Phosphorylates CREB1 and ATF1 in response to mitogenic or stress stimuli such as UV-C irradiation, epidermal growth factor (EGF) and anisomycin. Directly represses transcription via phosphorylation of 'Ser-1' of histone H2A. Phosphorylates 'Ser-10' of histone H3 in response to mitogenics, stress stimuli and EGF, which results in the transcriptional activation of several immediate early genes, including proto-oncogenes c-fos/FOS and c-jun/JUN. May also phosphorylate 'Ser-28' of histone H3. Mediates the mitogen- and stress-induced phosphorylation of high mobility group protein 1 (HMGN1/HMG14). The chain is Ribosomal protein S6 kinase alpha-5 (RPS6KA5) from Gallus gallus (Chicken).